A 146-amino-acid polypeptide reads, in one-letter code: Hemoglobin subunit beta (146 aa).

Positions 2-146 (HWSAEEKQLI…VAHALARKYH (145 aa)) constitute a Globin domain. Residues His-63 and His-92 each contribute to the heme b site.

The protein belongs to the globin family. Heterotetramer of two alpha chains and two beta chains. As to expression, red blood cells.

Functionally, involved in oxygen transport from the lung to the various peripheral tissues. This Columba livia (Rock dove) protein is Hemoglobin subunit beta (HBB).